The chain runs to 889 residues: Rho GTPase-activating protein 27 (889 aa).

In terms of domain architecture, SH3 spans valine 6–alanine 69. A disordered region spans residues alanine 104–arginine 132. Phosphoserine is present on residues serine 156, serine 216, and serine 249. 2 consecutive WW domains span residues proline 246 to glutamate 280 and valine 299 to glutamate 333. Acidic residues predominate over residues glutamate 329 to glutamate 341. A disordered region spans residues glutamate 329–serine 397. Position 347 is a phosphoserine (serine 347). The segment covering glutamate 383 to glycine 395 has biased composition (low complexity). The WW 3 domain maps to histidine 411–valine 444. A disordered region spans residues proline 447–alanine 474. Residue serine 456 is modified to Phosphoserine. Threonine 461 carries the phosphothreonine modification. Serine 466 is modified (phosphoserine). The region spanning threonine 496–glutamine 612 is the PH domain. Positions glutamate 617–leucine 655 are disordered. The 190-residue stretch at cysteine 697 to phenylalanine 886 folds into the Rho-GAP domain.

Interacts with SH3KBP1/CIN85. As to expression, expressed in germinal center B-cell, spleen, chronic lymphocytic leukemia, pancreatic cancer and lung cancer.

The protein localises to the cytoplasm. The protein resides in the membrane. Functionally, rho GTPase-activating protein which may be involved in clathrin-mediated endocytosis. GTPase activators for the Rho-type GTPases act by converting them to an inactive GDP-bound state. Has activity toward CDC42 and RAC1. This Homo sapiens (Human) protein is Rho GTPase-activating protein 27.